Consider the following 352-residue polypeptide: MTIAIGTPEEKRGLFDDMDDWLRRDRFVFVGWSGLLLLPCAYFAVGGWLTGTTFVTSWYTHGLASSYLEGCNVLTAAVSTPANSMAHSLLLLWGPEAQGDFTRWCQLGGLWTFIALHGSFGLIGFMLRQFEIARAIGLRPYNAIAFSGPISVFVSVFLIYPLGQSGWFFAPSFGVAAIFRFILFFQGFHNWTLNPFHMMGVAGVLGAALLCAIHGATVENTLFEDGDGANTFRAFNPTQAEETYSMVTANRFWSQIFGIAFSNKRWLHFFMLFVPVTGLWMSAIGVVGLALNLRAYDFVSQELRAAEDPEFETFYTKNLLLNEGIRAWMAAQDQPHEKLVFPEEVLPRGNAL.

Threonine 2 is subject to N-acetylthreonine. Phosphothreonine is present on threonine 2. A helical transmembrane segment spans residues 40 to 60 (CAYFAVGGWLTGTTFVTSWYT). Histidine 117 is a chlorophyll a binding site. Residues 124 to 140 (GFMLRQFEIARAIGLRP) form a helical membrane-spanning segment. Glutamine 129 and asparagine 142 together coordinate pheophytin a. A helical transmembrane segment spans residues 152–165 (VFVSVFLIYPLGQS). Histidine 197 is a binding site for chlorophyll a. A helical membrane pass occupies residues 207–227 (AALLCAIHGATVENTLFEDGD). A plastoquinone is bound by residues histidine 214 and phenylalanine 261. Histidine 214 provides a ligand contact to Fe cation. Histidine 268 is a Fe cation binding site. Residues 278–294 (GLWMSAIGVVGLALNLR) traverse the membrane as a helical segment.

The protein belongs to the reaction center PufL/M/PsbA/D family. PSII is composed of 1 copy each of membrane proteins PsbA, PsbB, PsbC, PsbD, PsbE, PsbF, PsbH, PsbI, PsbJ, PsbK, PsbL, PsbM, PsbT, PsbX, PsbY, PsbZ, Psb30/Ycf12, at least 3 peripheral proteins of the oxygen-evolving complex and a large number of cofactors. It forms dimeric complexes. The D1/D2 heterodimer binds P680, chlorophylls that are the primary electron donor of PSII, and subsequent electron acceptors. It shares a non-heme iron and each subunit binds pheophytin, quinone, additional chlorophylls, carotenoids and lipids. There is also a Cl(-1) ion associated with D1 and D2, which is required for oxygen evolution. The PSII complex binds additional chlorophylls, carotenoids and specific lipids. serves as cofactor.

Its subcellular location is the plastid. The protein localises to the chloroplast thylakoid membrane. The catalysed reaction is 2 a plastoquinone + 4 hnu + 2 H2O = 2 a plastoquinol + O2. Photosystem II (PSII) is a light-driven water:plastoquinone oxidoreductase that uses light energy to abstract electrons from H(2)O, generating O(2) and a proton gradient subsequently used for ATP formation. It consists of a core antenna complex that captures photons, and an electron transfer chain that converts photonic excitation into a charge separation. The D1/D2 (PsbA/PsbD) reaction center heterodimer binds P680, the primary electron donor of PSII as well as several subsequent electron acceptors. D2 is needed for assembly of a stable PSII complex. In Nephroselmis olivacea (Green alga), this protein is Photosystem II D2 protein.